The following is a 154-amino-acid chain: Ribosomal RNA large subunit methyltransferase H (154 aa).

S-adenosyl-L-methionine contacts are provided by Leu70 and Gly102.

It belongs to the RNA methyltransferase RlmH family. In terms of assembly, homodimer.

It is found in the cytoplasm. It carries out the reaction pseudouridine(1915) in 23S rRNA + S-adenosyl-L-methionine = N(3)-methylpseudouridine(1915) in 23S rRNA + S-adenosyl-L-homocysteine + H(+). Functionally, specifically methylates the pseudouridine at position 1915 (m3Psi1915) in 23S rRNA. In Hyphomonas neptunium (strain ATCC 15444), this protein is Ribosomal RNA large subunit methyltransferase H.